The sequence spans 237 residues: CDP-diacylglycerol--inositol 3-phosphatidyltransferase (237 aa).

The Cytoplasmic portion of the chain corresponds to 1–12 (MGKNEQKDPNVY). The chain crosses the membrane as a helical span at residues 13-33 (FFVPNLIGFTRVFLVLISLYF). Topologically, residues 34–41 (MSWHPNYC) are lumenal. The chain crosses the membrane as a helical span at residues 42 to 62 (TIVYLYSSLLDAFDGWAARKL). Positions 52 and 55 each coordinate Mg(2+). 3 residues coordinate a CDP-1,2-diacyl-sn-glycerol: Gly56, Arg60, and Thr66. The Cytoplasmic segment spans residues 63–71 (HQATNFGAI). Residues 72 to 92 (LDMVTDRCATSCLLCFLCAAY) traverse the membrane as a helical segment. Asp73 and Asp77 together coordinate Mg(2+). Residue Asp77 is the Proton acceptor of the active site. At 93–94 (PK) the chain is on the lumenal side. Residues 95 to 115 (YAIIFQLLVSLDLASHYMHMY) traverse the membrane as a helical segment. The Cytoplasmic portion of the chain corresponds to 116–144 (STLHQGASSHKTVTKKHNWMLRLYYGNNK). The helical transmembrane segment at 145–165 (VLFIFCAANEMFFVALYLLSF) threads the bilayer. At 166–185 (TPRTPPKLGYLPVPSFIYST) the chain is on the lumenal side. Residues 186–206 (GELPLSYPTLLAVLCGPICLA) traverse the membrane as a helical segment. Over 207-237 (KQIINVVQLVNAANALVKMDVEQRRAAKKLQ) the chain is Cytoplasmic.

The protein belongs to the CDP-alcohol phosphatidyltransferase class-I family. The cofactor is Mn(2+). It depends on Mg(2+) as a cofactor.

It is found in the microsome membrane. Its subcellular location is the endoplasmic reticulum membrane. It localises to the golgi apparatus membrane. The protein localises to the mitochondrion outer membrane. The catalysed reaction is a CDP-1,2-diacyl-sn-glycerol + myo-inositol = a 1,2-diacyl-sn-glycero-3-phospho-(1D-myo-inositol) + CMP + H(+). Functionally, catalyzes the synthesis of phosphatidylinositol (PtdIns). The chain is CDP-diacylglycerol--inositol 3-phosphatidyltransferase (pis1) from Schizosaccharomyces pombe (strain 972 / ATCC 24843) (Fission yeast).